A 689-amino-acid polypeptide reads, in one-letter code: Solute carrier family 22 member 23 (689 aa).

2 disordered regions span residues 1 to 55 (MAID…PLPA) and 162 to 188 (TASWGTTSNRSNSSDTPPLPSPPGKGN). Asn24 carries an N-linked (GlcNAc...) asparagine glycan. A compositionally biased stretch (polar residues) spans 165 to 177 (WGTTSNRSNSSDT). The next 2 membrane-spanning stretches (helical) occupy residues 229 to 249 (FSLLVGLIFGYLITGCIADWV) and 253 to 273 (PVLLFSTIFILIFGLTVALSV). N-linked (GlcNAc...) asparagine glycosylation occurs at Asn274. Helical transmembrane passes span 283–303 (FFEGFCLAGIILTLYALRIEL), 310–330 (FIITMVASFVAMAGQFLMPGL), 339–359 (VLQALIICPFLLMLLYWSIFP), 466–486 (TMASIALASCLAMCLVVKFLG), 489–509 (GGLLLFMILTALASLLQLGLL), 541–561 (IAFSIVGMFASHAVGSLSVFF), 572–592 (CGGLGLVLASAGFGMLTAPII), and 601–621 (FLHHIIFACCTLICIICILLL).

Belongs to the major facilitator (TC 2.A.1) superfamily. Organic cation transporter (TC 2.A.1.19) family.

It is found in the membrane. The polypeptide is Solute carrier family 22 member 23 (Slc22a23) (Mus musculus (Mouse)).